We begin with the raw amino-acid sequence, 320 residues long: METELDDERDGEVVVVGGGVIGLTTAVVLAERGRRVRLWTREPAERTTSVVAGGLWWPYRIEPVALAQAWALRSLDVYEELAARPGQTGVRMLEGVLGETGLDEVDGWAAARLPGLRAASAAEYAGTGLWARLPLIDMSTHLPWLRERLLAAGGTVEDRAVTDLAEADAPVVVNCTGLGARELVPDPAVRPVRGQLVVVENPGIHNWLVAADADSGETTYFLPQPGRLLLGGTAEEDAWSTEPDPEVAAAIVRRCAALRPEIAGARVLAHLVGLRPARDAVRLERGTLPDGRRLVHNYGHGGAGVTVAWGCAQEAARLAS.

The FAD site is built by Gly-18, Gly-19, Val-20, Ile-21, Thr-47, Thr-48, Ser-49, Gly-53, Gly-54, Leu-55, Val-161, and Thr-176. D-proline-binding residues include Tyr-220 and Arg-275. Residues Tyr-220 and Arg-275 each coordinate D-serine. FAD-binding residues include Arg-275, Gly-301, Gly-302, Gly-304, and Thr-306. Gly-302 is a D-proline binding site. Gly-302 is a binding site for D-serine.

This sequence belongs to the DAMOX/DASOX family. FAD serves as cofactor.

The protein resides in the cytoplasm. It is found in the secreted. It localises to the cell wall. The enzyme catalyses a D-alpha-amino acid + O2 + H2O = a 2-oxocarboxylate + H2O2 + NH4(+). The catalysed reaction is D-leucine + O2 + H2O = 4-methyl-2-oxopentanoate + H2O2 + NH4(+). It carries out the reaction D-valine + O2 + H2O = 3-methyl-2-oxobutanoate + H2O2 + NH4(+). It catalyses the reaction D-isoleucine + O2 + H2O = (R)-3-methyl-2-oxopentanoate + H2O2 + NH4(+). The enzyme catalyses D-methionine + O2 + H2O = 4-methylsulfanyl-2-oxobutanoate + H2O2 + NH4(+). Its function is as follows. Catalyzes the oxidative deamination of D-amino acids with broad substrate specificity. This Streptomyces coelicolor (strain ATCC BAA-471 / A3(2) / M145) protein is D-amino-acid oxidase.